The sequence spans 106 residues: DNA-directed RNA polymerase subunit Rpo6 (106 aa).

This sequence belongs to the archaeal Rpo6/eukaryotic RPB6 RNA polymerase subunit family. In terms of assembly, part of the RNA polymerase complex.

The protein resides in the cytoplasm. The catalysed reaction is RNA(n) + a ribonucleoside 5'-triphosphate = RNA(n+1) + diphosphate. DNA-dependent RNA polymerase (RNAP) catalyzes the transcription of DNA into RNA using the four ribonucleoside triphosphates as substrates. In Pyrobaculum aerophilum (strain ATCC 51768 / DSM 7523 / JCM 9630 / CIP 104966 / NBRC 100827 / IM2), this protein is DNA-directed RNA polymerase subunit Rpo6.